An 81-amino-acid chain; its full sequence is Putative sulfur carrier protein VNG_5061C/VNG_5236C/VNG_6059C/VNG_6467C (81 aa).

The active-site Cysteine persulfide intermediate is the cysteine 18.

The protein belongs to the sulfur carrier protein TusA family.

The protein is Putative sulfur carrier protein VNG_5061C/VNG_5236C/VNG_6059C/VNG_6467C of Halobacterium salinarum (strain ATCC 700922 / JCM 11081 / NRC-1) (Halobacterium halobium).